The sequence spans 275 residues: Malonyl-[acyl-carrier protein] O-methyltransferase (275 aa).

The protein belongs to the methyltransferase superfamily.

The enzyme catalyses malonyl-[ACP] + S-adenosyl-L-methionine = malonyl-[ACP] methyl ester + S-adenosyl-L-homocysteine. Its pathway is cofactor biosynthesis; biotin biosynthesis. Its function is as follows. Converts the free carboxyl group of a malonyl-thioester to its methyl ester by transfer of a methyl group from S-adenosyl-L-methionine (SAM). It allows to synthesize pimeloyl-ACP via the fatty acid synthetic pathway. This is Malonyl-[acyl-carrier protein] O-methyltransferase from Methylococcus capsulatus (strain ATCC 33009 / NCIMB 11132 / Bath).